The sequence spans 130 residues: Lysozyme C (130 aa).

Residues 1-130 (KVWERCALAR…VEQYVEGCDL (130 aa)) form the C-type lysozyme domain. 4 disulfides stabilise this stretch: C6-C128, C30-C116, C65-C81, and C77-C95. Catalysis depends on residues E35 and D53.

Belongs to the glycosyl hydrolase 22 family. In terms of assembly, monomer.

It catalyses the reaction Hydrolysis of (1-&gt;4)-beta-linkages between N-acetylmuramic acid and N-acetyl-D-glucosamine residues in a peptidoglycan and between N-acetyl-D-glucosamine residues in chitodextrins.. Lysozymes have primarily a bacteriolytic function; those in tissues and body fluids are associated with the monocyte-macrophage system and enhance the activity of immunoagents. This chain is Lysozyme C (LYZ), found in Camelus dromedarius (Dromedary).